Reading from the N-terminus, the 162-residue chain is Endoribonuclease YbeY (162 aa).

Zn(2+)-binding residues include H128, H132, and H138.

This sequence belongs to the endoribonuclease YbeY family. Zn(2+) serves as cofactor.

It localises to the cytoplasm. Its function is as follows. Single strand-specific metallo-endoribonuclease involved in late-stage 70S ribosome quality control and in maturation of the 3' terminus of the 16S rRNA. The polypeptide is Endoribonuclease YbeY (Lactococcus lactis subsp. lactis (strain IL1403) (Streptococcus lactis)).